Reading from the N-terminus, the 430-residue chain is Enolase (430 aa).

Q167 serves as a coordination point for (2R)-2-phosphoglycerate. The Proton donor role is filled by E209. Positions 245, 286, and 313 each coordinate Mg(2+). The (2R)-2-phosphoglycerate site is built by K338, R367, S368, and K389. K338 functions as the Proton acceptor in the catalytic mechanism.

The protein belongs to the enolase family. Mg(2+) is required as a cofactor.

Its subcellular location is the cytoplasm. The protein localises to the secreted. It localises to the cell surface. It catalyses the reaction (2R)-2-phosphoglycerate = phosphoenolpyruvate + H2O. The protein operates within carbohydrate degradation; glycolysis; pyruvate from D-glyceraldehyde 3-phosphate: step 4/5. Functionally, catalyzes the reversible conversion of 2-phosphoglycerate (2-PG) into phosphoenolpyruvate (PEP). It is essential for the degradation of carbohydrates via glycolysis. This chain is Enolase, found in Synechococcus sp. (strain CC9605).